Consider the following 478-residue polypeptide: PRAME family member 26 (478 aa).

The stretch at 99–126 (RWKLQVLDLQDVCENFWMVWSEAMARGC) is one LRR 1; degenerate repeat. An LRR 2; degenerate repeat occupies 181 to 205 (HLCCKKLKILGMPFRNIRSILKMVN). An LRR 3; degenerate repeat occupies 206–232 (LDCIQEVEVNCKWVLPILTQFTPYLGH). The stretch at 233-268 (MRNLQKLVLSHMDVSRYVSPEQKKEIVTQFTTQFLK) is one LRR 4; degenerate repeat. 5 LRR repeats span residues 269 to 294 (LHCLQKLYMNSVSFLEGHLDQLLSCL), 295 to 326 (KTSLKVLTITNCVLLESDLKHLSQCPSISQLK), 327 to 347 (TLDLSGIRLTNYSLVPLQILL), 351 to 378 (AATLEYLDLDDCGIIDSQVNAILPALSR), and 379 to 403 (CFELNTFSFCGNPISMATLENLLSH).

This sequence belongs to the PRAME family.

This is PRAME family member 26 from Homo sapiens (Human).